We begin with the raw amino-acid sequence, 280 residues long: MPSDREKQRILRERRQAKMAKGGASDRLNKILSQGSSVKTSAVSVLDQPQPADHDPEGMDISTIASKPTPEPELDIDAMLNSVLGGNMGAGGAANGDPGSDPFTQMMMNMMQGGGPEGMLGQEGGTNPMSANMEYQQQLIAYNLYQQRKVRHRFLVVRMVSILANFVYHFLTISDFSFSPSANPFIRSIPPTSSVSSFFQIFVAIEAVLVAAYIAASRNVPSNNNGLLVKGISMAAMFVPKLQRFQPLIMKIIGCWDTVTFVLNDLGLVVLLFGLISFRR.

The Cytoplasmic segment spans residues 1–149 (MPSDREKQRI…IAYNLYQQRK (149 aa)). Residues 15–59 (RQAKMAKGGASDRLNKILSQGSSVKTSAVSVLDQPQPADHDPEGM) are disordered. Residues 31–43 (ILSQGSSVKTSAV) are compositionally biased toward polar residues. A helical membrane pass occupies residues 150–170 (VRHRFLVVRMVSILANFVYHF). Topologically, residues 171–197 (LTISDFSFSPSANPFIRSIPPTSSVSS) are lumenal. A helical transmembrane segment spans residues 198–217 (FFQIFVAIEAVLVAAYIAAS). The Cytoplasmic portion of the chain corresponds to 218-257 (RNVPSNNNGLLVKGISMAAMFVPKLQRFQPLIMKIIGCWD). Residues 258–278 (TVTFVLNDLGLVVLLFGLISF) traverse the membrane as a helical segment. Over 279–280 (RR) the chain is Lumenal.

Belongs to the GET2 family. As to quaternary structure, component of the Golgi to ER traffic (GET) complex, which is composed of GET1, GET2 and GET3. Within the complex, GET1 and GET2 form a heterotetramer which is stabilized by phosphatidylinositol binding and which binds to the GET3 homodimer.

The protein resides in the endoplasmic reticulum membrane. It localises to the golgi apparatus membrane. Its function is as follows. Required for the post-translational delivery of tail-anchored (TA) proteins to the endoplasmic reticulum. Together with GET1, acts as a membrane receptor for soluble GET3, which recognizes and selectively binds the transmembrane domain of TA proteins in the cytosol. The GET complex cooperates with the HDEL receptor ERD2 to mediate the ATP-dependent retrieval of resident ER proteins that contain a C-terminal H-D-E-L retention signal from the Golgi to the ER. In Meyerozyma guilliermondii (strain ATCC 6260 / CBS 566 / DSM 6381 / JCM 1539 / NBRC 10279 / NRRL Y-324) (Yeast), this protein is Golgi to ER traffic protein 2.